Reading from the N-terminus, the 202-residue chain is Lipoprotein signal peptidase (202 aa).

Residues 1-29 (MPDEPTGSADPLTSTEEAGGAGEPNAPAP) form a disordered region. 3 helical membrane passes run 35-55 (MLLS…VVAV), 88-108 (GYTW…FWMG), and 112-132 (VSPW…GNLV). Active-site residues include aspartate 148 and aspartate 162. A helical membrane pass occupies residues 160–180 (VADPSVVGGAILLVILSIFGF).

This sequence belongs to the peptidase A8 family.

The protein localises to the cell membrane. It catalyses the reaction Release of signal peptides from bacterial membrane prolipoproteins. Hydrolyzes -Xaa-Yaa-Zaa-|-(S,diacylglyceryl)Cys-, in which Xaa is hydrophobic (preferably Leu), and Yaa (Ala or Ser) and Zaa (Gly or Ala) have small, neutral side chains.. Its pathway is protein modification; lipoprotein biosynthesis (signal peptide cleavage). Functionally, this protein specifically catalyzes the removal of signal peptides from prolipoproteins. This chain is Lipoprotein signal peptidase, found in Mycobacterium bovis (strain ATCC BAA-935 / AF2122/97).